The sequence spans 555 residues: Transmembrane protein 87A (555 aa).

Positions 1 to 21 (MAAAAWLQVLPVILLLLGAHP) are cleaved as a signal peptide. The Lumenal segment spans residues 22-225 (SPLSFFSAGP…YEYLTLEDYP (204 aa)). 2 disulfides stabilise this stretch: Cys-74–Cys-128 and Cys-89–Cys-431. Asn-79, Asn-127, Asn-157, and Asn-160 each carry an N-linked (GlcNAc...) asparagine glycan. A helical membrane pass occupies residues 226–246 (LMIFFMVMCIVYVLFGVLWLA). At 247–257 (WSACYWRDLLR) the chain is on the cytoplasmic side. A helical transmembrane segment spans residues 258–278 (IQFWIGAVIFLGMLEKAVFYA). Topologically, residues 279–305 (EFQNIRYKGESVQGALILAELLSAVKR) are lumenal. A helical transmembrane segment spans residues 306 to 322 (SLARTLVIIVSLGYGIV). At 323-325 (KPR) the chain is on the cytoplasmic side. Residues 326–346 (LGVTLHKVVVAGALYLLFSGM) traverse the membrane as a helical segment. Residues 347–361 (EGVLRVTGAQTDLAS) lie on the Lumenal side of the membrane. Residues 362–382 (LAFIPLAFLDTALCWWIFISL) form a helical membrane-spanning segment. Residues 383 to 403 (TQTMKLLKLRRNIVKLSLYRH) lie on the Cytoplasmic side of the membrane. A helical transmembrane segment spans residues 404 to 424 (FTNTLILAVAASIVFIIWTTM). The Lumenal portion of the chain corresponds to 425 to 437 (KFRIVTCQSDWRE). Residues 438–458 (LWVDDAIWRLLFSMILFVIMV) form a helical membrane-spanning segment. Over 459 to 555 (LWRPSANNQR…ITHFERSKME (97 aa)) the chain is Cytoplasmic. Positions 473–516 (PLSEEEEEDEQKEPMLKESFEGMKMRSTKQEPNGNSKVNKAQED) are disordered. The span at 484–496 (KEPMLKESFEGMK) shows a compositional bias: basic and acidic residues. The span at 502–511 (QEPNGNSKVN) shows a compositional bias: polar residues. Position 540 is a phosphoserine (Ser-540).

Belongs to the LU7TM family. TMEM87 subfamily. In terms of assembly, may interact with STOML3; STOML3 potentiates the mechanosensitive ion channel activity associated with TMEM87A.

It localises to the cell membrane. It is found in the golgi apparatus membrane. The protein localises to the cell projection. Its subcellular location is the ruffle. Functionally, potential monoatomic ion channel gated by mechanical force, implicated in normal touch sensitivity through the generation of mechanically activated currents. However, a direct channel activity is debated and an alternative could be that it functions as a chaperone for an unidentified mechanosensitive ion channel. Could also be involved in cell mechanosensitivity regulating cell adhesion and migration. May also be involved in retrograde transport from endosomes to the trans-Golgi network (TGN). This chain is Transmembrane protein 87A, found in Homo sapiens (Human).